We begin with the raw amino-acid sequence, 161 residues long: SsrA-binding protein (161 aa).

It belongs to the SmpB family.

It localises to the cytoplasm. Functionally, required for rescue of stalled ribosomes mediated by trans-translation. Binds to transfer-messenger RNA (tmRNA), required for stable association of tmRNA with ribosomes. tmRNA and SmpB together mimic tRNA shape, replacing the anticodon stem-loop with SmpB. tmRNA is encoded by the ssrA gene; the 2 termini fold to resemble tRNA(Ala) and it encodes a 'tag peptide', a short internal open reading frame. During trans-translation Ala-aminoacylated tmRNA acts like a tRNA, entering the A-site of stalled ribosomes, displacing the stalled mRNA. The ribosome then switches to translate the ORF on the tmRNA; the nascent peptide is terminated with the 'tag peptide' encoded by the tmRNA and targeted for degradation. The ribosome is freed to recommence translation, which seems to be the essential function of trans-translation. The chain is SsrA-binding protein from Haemophilus influenzae (strain 86-028NP).